A 283-amino-acid chain; its full sequence is MSRSPLIARTVPALRRAADNLRKRKATIALVPTMGALHDGHVSLVRLAKRRASRVVVSIFVNPTQFAPTEDFGAYPRTWKADIAKLAAEDVDIVWHPGVEAMYPEGFATRIVPEGPALAGLEDRFRPHFFGGVATVVGKLFTQCRPDFAIFGEKDFQQLRVVTQMARDLDLGVKVIGSRTVRERDGLAMSSRNVYLSPQERQTATTLYRAMKDSAGRIRAGEAIASAMARGAATIKAAGFVLDYFEARHAETLAQVTSRKDGPLRILVAAKLGTTRLIDNIAV.

34–41 is a binding site for ATP; it reads MGALHDGH. Residue His-41 is the Proton donor of the active site. Gln-65 provides a ligand contact to (R)-pantoate. Gln-65 serves as a coordination point for beta-alanine. 152–155 serves as a coordination point for ATP; sequence GEKD. Gln-158 is a (R)-pantoate binding site. ATP contacts are provided by residues Val-181 and 189-192; that span reads MSSR.

Belongs to the pantothenate synthetase family. As to quaternary structure, homodimer.

The protein localises to the cytoplasm. It catalyses the reaction (R)-pantoate + beta-alanine + ATP = (R)-pantothenate + AMP + diphosphate + H(+). It participates in cofactor biosynthesis; (R)-pantothenate biosynthesis; (R)-pantothenate from (R)-pantoate and beta-alanine: step 1/1. In terms of biological role, catalyzes the condensation of pantoate with beta-alanine in an ATP-dependent reaction via a pantoyl-adenylate intermediate. This is Pantothenate synthetase 2 from Bradyrhizobium diazoefficiens (strain JCM 10833 / BCRC 13528 / IAM 13628 / NBRC 14792 / USDA 110).